Here is a 467-residue protein sequence, read N- to C-terminus: Argininosuccinate lyase 1 (467 aa).

Belongs to the lyase 1 family. Argininosuccinate lyase subfamily.

It is found in the cytoplasm. It carries out the reaction 2-(N(omega)-L-arginino)succinate = fumarate + L-arginine. Its pathway is amino-acid biosynthesis; L-arginine biosynthesis; L-arginine from L-ornithine and carbamoyl phosphate: step 3/3. The protein is Argininosuccinate lyase 1 of Rhizobium meliloti (strain 1021) (Ensifer meliloti).